The primary structure comprises 240 residues: Fibronectin type III domain-containing protein 5 (240 aa).

Positions 1-10 (MQAARGGAGR) are enriched in gly residues. Residues 1–33 (MQAARGGAGRPGREGRGLERECERSPGPGVAMP) form a disordered region. Positions 11-24 (PGREGRGLERECER) are enriched in basic and acidic residues. The Fibronectin type-III domain occupies 64–155 (APVNVTVRHL…EPVLFKTPRE (92 aa)). N67 and N112 each carry an N-linked (GlcNAc...) asparagine glycan. Residues 181-201 (GEVLIIVVVLFMWAGVIALFC) form a helical membrane-spanning segment. A compositionally biased stretch (basic and acidic residues) spans 210 to 221 (NEPNNNKEKTKS). The tract at residues 210–240 (NEPNNNKEKTKSASETSTPEHQGGGLLRSKI) is disordered. The segment covering 231–240 (QGGGLLRSKI) has biased composition (gly residues). The short motif at 238–240 (SKI) is the Microbody targeting signal element.

As to quaternary structure, dimer; may exist in other oligomeric forms. The extracellular domain is cleaved and released from the cell membrane. In terms of processing, N-Glycosylated. In adult, it is highly expressed in skeletal muscle, heart and brain.

It is found in the cell membrane. The protein localises to the peroxisome membrane. Its subcellular location is the secreted. Mediates beneficial effects of muscular exercise. Induces browning of white adipose tissue by stimulating UCP1 expression, at least in part, via the nuclear receptor PPARA. This is Fibronectin type III domain-containing protein 5 (Fndc5) from Mus musculus (Mouse).